A 720-amino-acid chain; its full sequence is Putative fatty acid oxidation complex trifunctional enzyme (720 aa).

The segment at 1–384 is 3-hydroxyacyl-CoA dehydrogenase; the sequence is MQNEIKKVCV…SWHYGPFELL (384 aa). An enoyl-CoA hydratase/isomerase region spans residues 453–720; sequence FVITTKMNSL…TIEKLQAIVG (268 aa).

This sequence in the N-terminal section; belongs to the 3-hydroxyacyl-CoA dehydrogenase family. It in the C-terminal section; belongs to the enoyl-CoA hydratase/isomerase family.

It catalyses the reaction a (3S)-3-hydroxyacyl-CoA + NAD(+) = a 3-oxoacyl-CoA + NADH + H(+). It carries out the reaction a (3S)-3-hydroxyacyl-CoA = a (2E)-enoyl-CoA + H2O. The catalysed reaction is a 4-saturated-(3S)-3-hydroxyacyl-CoA = a (3E)-enoyl-CoA + H2O. The enzyme catalyses a (3Z)-enoyl-CoA = a 4-saturated (2E)-enoyl-CoA. It catalyses the reaction a (3E)-enoyl-CoA = a 4-saturated (2E)-enoyl-CoA. This is Putative fatty acid oxidation complex trifunctional enzyme from Rickettsia prowazekii (strain Madrid E).